Consider the following 382-residue polypeptide: Probable inactive dehydrogenase easA (382 aa).

FMN is bound by residues 25 to 27 (PMT), A60, Q102, and H171. Residues H171 and N174 each contribute to the substrate site. FMN contacts are provided by residues K223, G299, 324-325 (GR), and R325. Residue Y352 coordinates substrate.

It belongs to the NADH:flavin oxidoreductase/NADH oxidase family.

Functionally, probable inactive dehydrogenase; part of the gene cluster that mediates the biosynthesis of fungal ergot alkaloid. DmaW catalyzes the first step of ergot alkaloid biosynthesis by condensing dimethylallyl diphosphate (DMAP) and tryptophan to form 4-dimethylallyl-L-tryptophan. The second step is catalyzed by the methyltransferase easF that methylates 4-dimethylallyl-L-tryptophan in the presence of S-adenosyl-L-methionine, resulting in the formation of 4-dimethylallyl-L-abrine. The catalase easC and the FAD-dependent oxidoreductase easE then transform 4-dimethylallyl-L-abrine to chanoclavine-I which is further oxidized by easD in the presence of NAD(+), resulting in the formation of chanoclavine-I aldehyde. Agroclavine dehydrogenase easG then mediates the conversion of chanoclavine-I aldehyde to agroclavine via a non-enzymatic adduct reaction: the substrate is an iminium intermediate that is formed spontaneously from chanoclavine-I aldehyde in the presence of glutathione. Further conversion of agroclavine to paspalic acid is a two-step process involving oxidation of agroclavine to elymoclavine and of elymoclavine to paspalic acid, the second step being performed by the elymoclavine oxidase cloA. However, cloA does not encode a functional enzyme indicating that C.fusiformis terminates its ergot alkaloid pathway at elymoclavine. The protein is Probable inactive dehydrogenase easA of Claviceps fusiformis (Ergot fungus).